A 296-amino-acid chain; its full sequence is Glycine--tRNA ligase alpha subunit (296 aa).

It belongs to the class-II aminoacyl-tRNA synthetase family. As to quaternary structure, tetramer of two alpha and two beta subunits.

Its subcellular location is the cytoplasm. The catalysed reaction is tRNA(Gly) + glycine + ATP = glycyl-tRNA(Gly) + AMP + diphosphate. The polypeptide is Glycine--tRNA ligase alpha subunit (Synechococcus sp. (strain WH7803)).